The following is a 793-amino-acid chain: uncharacterized protein (793 aa).

Residues Met1 to Ala21 form the signal peptide. Cysteines 769 and 792 form a disulfide.

Belongs to the fimbrial export usher family.

It localises to the cell outer membrane. In terms of biological role, involved in the export and assembly of a fimbrial subunit across the outer membrane. This is an uncharacterized protein from Escherichia coli (strain K12).